The primary structure comprises 394 residues: Elongation factor Tu (394 aa).

The tr-type G domain maps to 10-204; the sequence is KPHVNIGTIG…AVDEYIPTPD (195 aa). Residues 19 to 26 are G1; it reads GHIDHGKT. 19–26 is a binding site for GTP; sequence GHIDHGKT. Mg(2+) is bound at residue Thr26. The tract at residues 60–64 is G2; it reads GITIN. The G3 stretch occupies residues 81-84; that stretch reads DCPG. Residues 81–85 and 136–139 each bind GTP; these read DCPGH and NKCD. Residues 136–139 form a G4 region; sequence NKCD. The G5 stretch occupies residues 174-176; the sequence is SAL.

It belongs to the TRAFAC class translation factor GTPase superfamily. Classic translation factor GTPase family. EF-Tu/EF-1A subfamily. As to quaternary structure, monomer.

It is found in the cytoplasm. The catalysed reaction is GTP + H2O = GDP + phosphate + H(+). In terms of biological role, GTP hydrolase that promotes the GTP-dependent binding of aminoacyl-tRNA to the A-site of ribosomes during protein biosynthesis. The polypeptide is Elongation factor Tu (Mycoplasmoides gallisepticum (strain R(low / passage 15 / clone 2)) (Mycoplasma gallisepticum)).